The primary structure comprises 435 residues: D-amino acid dehydrogenase (435 aa).

Position 3–17 (3–17) interacts with FAD; the sequence is VLILGSGVIGTTSAW.

Belongs to the DadA oxidoreductase family. FAD is required as a cofactor.

It catalyses the reaction a D-alpha-amino acid + A + H2O = a 2-oxocarboxylate + AH2 + NH4(+). Its pathway is amino-acid degradation; D-alanine degradation; NH(3) and pyruvate from D-alanine: step 1/1. Its function is as follows. Oxidative deamination of D-amino acids. The polypeptide is D-amino acid dehydrogenase (Xylella fastidiosa (strain M12)).